The sequence spans 623 residues: Leucine aminopeptidase 2 (623 aa).

A peptide-binding positions include 140-142 (QLE) and 266-271 (PYGGME). Residue His295 coordinates Zn(2+). The active-site Proton acceptor is Glu296. Zn(2+) is bound by residues His299 and Glu318. The active-site Proton donor is the Tyr382.

Belongs to the peptidase M1 family. It depends on Zn(2+) as a cofactor.

The protein resides in the cytoplasm. The protein localises to the nucleus. The catalysed reaction is an epoxide + H2O = an ethanediol. Functionally, aminopeptidase that preferentially cleaves di- and tripeptides. Also has low epoxide hydrolase activity (in vitro). Can hydrolyze the epoxide leukotriene LTA(4) but it forms preferentially 5,6-dihydroxy-7,9,11,14-eicosatetraenoic acid rather than the cytokine leukotriene B(4) as the product compared to the homologous mammalian enzyme (in vitro). This is Leucine aminopeptidase 2 from Eremothecium gossypii (strain ATCC 10895 / CBS 109.51 / FGSC 9923 / NRRL Y-1056) (Yeast).